Here is a 428-residue protein sequence, read N- to C-terminus: Dihydroorotase (428 aa).

Residues H59 and H61 each coordinate Zn(2+). Residues 61-63 (HFR) and N93 contribute to the substrate site. D151, H178, and H231 together coordinate Zn(2+). N277 lines the substrate pocket. D304 contacts Zn(2+). D304 is a catalytic residue. Substrate is bound by residues H308 and 322-323 (FG).

This sequence belongs to the metallo-dependent hydrolases superfamily. DHOase family. Class I DHOase subfamily. In terms of assembly, homodimer. It depends on Zn(2+) as a cofactor.

The catalysed reaction is (S)-dihydroorotate + H2O = N-carbamoyl-L-aspartate + H(+). Its pathway is pyrimidine metabolism; UMP biosynthesis via de novo pathway; (S)-dihydroorotate from bicarbonate: step 3/3. Catalyzes the reversible cyclization of carbamoyl aspartate to dihydroorotate. The chain is Dihydroorotase from Bacillus subtilis (strain 168).